The primary structure comprises 181 residues: Trans-acting factor D (181 aa).

Plays a role in 2-micron plasmid partitioning. Antagonizes transcriptional repression of recombinase FLP by REP1-REP2. Regulates both stability and copy number of the plasmid by blocking the formation of the REP1-REP2 repressor complex. This chain is Trans-acting factor D, found in Saccharomyces cerevisiae (strain ATCC 204508 / S288c) (Baker's yeast).